The primary structure comprises 222 residues: Large ribosomal subunit protein uL3 (222 aa).

Positions 129 to 150 are disordered; it reads HNFRGLPDSHGTERKHRSPGSI.

It belongs to the universal ribosomal protein uL3 family. In terms of assembly, part of the 50S ribosomal subunit. Forms a cluster with proteins L14 and L19.

One of the primary rRNA binding proteins, it binds directly near the 3'-end of the 23S rRNA, where it nucleates assembly of the 50S subunit. The protein is Large ribosomal subunit protein uL3 of Acidothermus cellulolyticus (strain ATCC 43068 / DSM 8971 / 11B).